The primary structure comprises 731 residues: Elongation factor 2 (731 aa).

The 242-residue stretch at Lys-19–Leu-260 folds into the tr-type G domain. GTP is bound by residues Ala-28 to Thr-35, Asp-94 to His-98, and Asn-148 to Asp-151. A Diphthamide modification is found at His-597.

Belongs to the TRAFAC class translation factor GTPase superfamily. Classic translation factor GTPase family. EF-G/EF-2 subfamily.

Its subcellular location is the cytoplasm. Its function is as follows. Catalyzes the GTP-dependent ribosomal translocation step during translation elongation. During this step, the ribosome changes from the pre-translocational (PRE) to the post-translocational (POST) state as the newly formed A-site-bound peptidyl-tRNA and P-site-bound deacylated tRNA move to the P and E sites, respectively. Catalyzes the coordinated movement of the two tRNA molecules, the mRNA and conformational changes in the ribosome. The chain is Elongation factor 2 from Methanoregula boonei (strain DSM 21154 / JCM 14090 / 6A8).